Consider the following 466-residue polypeptide: Ribosomal protein uS12 methylthiotransferase RimO (466 aa).

One can recognise an MTTase N-terminal domain in the interval 18-133; the sequence is PRIGFVSLGC…VMDAVHQHVP (116 aa). Residues Cys27, Cys63, Cys92, Cys164, Cys168, and Cys171 each coordinate [4Fe-4S] cluster. A Radical SAM core domain is found at 150–391; it reads LTPKHYAYLK…MAVAEAVSTA (242 aa). The TRAM domain maps to 394–466; it reads QRRVGSSMQV…QGHDLIGELI (73 aa).

Belongs to the methylthiotransferase family. RimO subfamily. It depends on [4Fe-4S] cluster as a cofactor.

It localises to the cytoplasm. The enzyme catalyses L-aspartate(89)-[ribosomal protein uS12]-hydrogen + (sulfur carrier)-SH + AH2 + 2 S-adenosyl-L-methionine = 3-methylsulfanyl-L-aspartate(89)-[ribosomal protein uS12]-hydrogen + (sulfur carrier)-H + 5'-deoxyadenosine + L-methionine + A + S-adenosyl-L-homocysteine + 2 H(+). Functionally, catalyzes the methylthiolation of an aspartic acid residue of ribosomal protein uS12. The chain is Ribosomal protein uS12 methylthiotransferase RimO from Leptothrix cholodnii (strain ATCC 51168 / LMG 8142 / SP-6) (Leptothrix discophora (strain SP-6)).